A 303-amino-acid chain; its full sequence is Small ribosomal subunit protein uS2 (303 aa).

The disordered stretch occupies residues 258–303; the sequence is ATLRENAVVTENEVKKTDEEEGASSEAARADAQNEEAVAKPGEEVE. Positions 294 to 303 are enriched in basic and acidic residues; it reads AVAKPGEEVE.

Belongs to the universal ribosomal protein uS2 family.

The protein is Small ribosomal subunit protein uS2 of Bifidobacterium animalis subsp. lactis (strain AD011).